The sequence spans 367 residues: tRNA/tmRNA (uracil-C(5))-methyltransferase (367 aa).

S-adenosyl-L-methionine-binding residues include Gln190, Tyr218, Asn223, Glu239, and Asp299. The active-site Nucleophile is Cys324. The active-site Proton acceptor is the Glu358.

The protein belongs to the class I-like SAM-binding methyltransferase superfamily. RNA M5U methyltransferase family. TrmA subfamily.

It carries out the reaction uridine(54) in tRNA + S-adenosyl-L-methionine = 5-methyluridine(54) in tRNA + S-adenosyl-L-homocysteine + H(+). It catalyses the reaction uridine(341) in tmRNA + S-adenosyl-L-methionine = 5-methyluridine(341) in tmRNA + S-adenosyl-L-homocysteine + H(+). Functionally, dual-specificity methyltransferase that catalyzes the formation of 5-methyluridine at position 54 (m5U54) in all tRNAs, and that of position 341 (m5U341) in tmRNA (transfer-mRNA). This chain is tRNA/tmRNA (uracil-C(5))-methyltransferase, found in Dickeya chrysanthemi (strain Ech1591) (Dickeya zeae (strain Ech1591)).